The sequence spans 351 residues: DNA polymerase IV (351 aa).

Residues 4–185 (IIHIDMDCFF…LPLAKIPGVG (182 aa)) form the UmuC domain. Aspartate 8 and aspartate 103 together coordinate Mg(2+). Glutamate 104 is a catalytic residue.

It belongs to the DNA polymerase type-Y family. In terms of assembly, monomer. Mg(2+) serves as cofactor.

Its subcellular location is the cytoplasm. The enzyme catalyses DNA(n) + a 2'-deoxyribonucleoside 5'-triphosphate = DNA(n+1) + diphosphate. Functionally, poorly processive, error-prone DNA polymerase involved in untargeted mutagenesis. Copies undamaged DNA at stalled replication forks, which arise in vivo from mismatched or misaligned primer ends. These misaligned primers can be extended by PolIV. Exhibits no 3'-5' exonuclease (proofreading) activity. May be involved in translesional synthesis, in conjunction with the beta clamp from PolIII. In Salmonella paratyphi A (strain ATCC 9150 / SARB42), this protein is DNA polymerase IV.